The sequence spans 621 residues: Chaperone protein dnaK (621 aa).

The disordered stretch occupies residues 597-621 (VYSSTQQDNSKTEDGSVIDTNSKEA).

This sequence belongs to the heat shock protein 70 family.

The protein resides in the plastid. The protein localises to the chloroplast. Acts as a chaperone. The protein is Chaperone protein dnaK of Gracilaria tenuistipitata var. liui (Red alga).